Reading from the N-terminus, the 1755-residue chain is Periplakin (1755 aa).

Over residues 1-11 the composition is skewed to basic residues; sequence MHSLFRKRNKG. A disordered region spans residues 1–20; that stretch reads MHSLFRKRNKGKYSPTVQTR. Ser-14 carries the phosphoserine modification. Coiled-coil stretches lie at residues 16 to 125 and 182 to 387; these read TVQT…KQMY and LAKD…QQVV. Spectrin repeat units lie at residues 214-315, 321-483, and 503-610; these read QDYM…SHLK, HQFH…HALQ, and RQLL…EKVD. Residues 397 to 453 enclose the SH3 domain; sequence LKPIPVEALCDFESDQGLISRGYSYTLQKNNGESWELTDSTGKKLAAPAVCFIIPPT. Position 463 is a phosphoserine (Ser-463). Coiled-coil stretches lie at residues 611–819 and 883–1644; these read VANR…RNSH and LSSG…SVAV. Phosphoserine occurs at positions 885, 947, 1583, and 1656. The interacts with BFSP2 and VIM stretch occupies residues 1556–1755; the sequence is ELDFLREENH…ELAVLVSGQK (200 aa). Plectin repeat units follow at residues 1650 to 1684 and 1699 to 1734; these read ENHL…WKMF and VKGP…AAQY.

It belongs to the plakin or cytolinker family. Homodimer or a heterodimer with EVPL. Found in a complex composed of PPL (via C-terminal linker domain), BFSP1 and BFSP2 in the retinal lens. Within the complex interacts (via C-terminal linker domain) with BFSP2. Interacts with VIM. Binds to the PH domain of AKT1. Interacts with FCGR1A. May interact with PPHLN1. In terms of tissue distribution, expressed in the retinal lens (at protein level).

It localises to the cell junction. The protein resides in the desmosome. It is found in the cytoplasm. The protein localises to the cytoskeleton. Its subcellular location is the cell membrane. Component of the cornified envelope of keratinocytes. May link the cornified envelope to desmosomes and intermediate filaments. May act as a localization signal in PKB/AKT-mediated signaling. This chain is Periplakin (Ppl), found in Mus musculus (Mouse).